Here is a 489-residue protein sequence, read N- to C-terminus: Homoserine O-acetyltransferase (489 aa).

Residues 69-438 form the AB hydrolase-1 domain; that stretch reads LLLCHALSGS…AEGHDGFLLE (370 aa). S163 (nucleophile) is an active-site residue. The tract at residues 255–329 is disordered; that stretch reads ASRHPYPDRL…QTTDSSSLNQ (75 aa). Over residues 280–290 the composition is skewed to basic and acidic residues; the sequence is EGNRNRRERPC. The span at 299–329 shows a compositional bias: low complexity; it reads SESALNSPASSVSSLPSLGASQTTDSSSLNQ. Residues D403 and H432 contribute to the active site.

Belongs to the AB hydrolase superfamily. MetX family.

The protein localises to the cytoplasm. The enzyme catalyses L-homoserine + acetyl-CoA = O-acetyl-L-homoserine + CoA. It participates in amino-acid biosynthesis; L-methionine biosynthesis via de novo pathway; O-acetyl-L-homoserine from L-homoserine: step 1/1. In terms of biological role, commits homoserine to the methionine biosynthesis pathway by catalyzing its O-acetylation. This is Homoserine O-acetyltransferase (met6) from Schizosaccharomyces pombe (strain 972 / ATCC 24843) (Fission yeast).